Here is a 270-residue protein sequence, read N- to C-terminus: Hematopoietically-expressed homeobox protein HHEX (270 aa).

The tract at residues 1-137 (MQYPHPGPAA…PFLQRPLHKR (137 aa)) is interaction with SOX13. Position 53 is a phosphoserine (Ser-53). Positions 137-196 (RKGGQVRFSNDQTIELEKKFETQKYLSPPERKRLAKMLQLSERQVKTWFQNRRAKWRRLK) form a DNA-binding region, homeobox. A required for WNT signaling induction region spans residues 137-270 (RKGGQVRFSN…EGDKSYFNAG (134 aa)). The interval 194–270 (RLKQENPQSN…EGDKSYFNAG (77 aa)) is disordered. Positions 222-241 (PSEQNKGASLDSSQCSPSPA) are enriched in polar residues. Residues 244-260 (EDLESEISEDSDQEVDI) are compositionally biased toward acidic residues.

Interacts with CD81; the interaction prevents nuclear translocation of HHEX. Interacts (via N-terminus) with SOX13; abolishes the SOX13-mediated inhibition of WNT-mediated transcriptional activity via competitive inhibition of the SOX13-TCF7 complex. Interacts with EIF4E; the interaction inhibits EIF4E-mediated mRNA nuclear export. In terms of tissue distribution, liver and promyelocytic leukemia cell line HL-60.

It is found in the nucleus. The protein resides in the nuclear body. The protein localises to the cytoplasm. In terms of biological role, recognizes the DNA sequence 5'-ATTAA-3'. Transcriptional repressor. Activator of WNT-mediated transcription in conjunction with CTNNB1. Establishes anterior identity at two levels; acts early to enhance canonical WNT-signaling by repressing expression of TLE4, and acts later to inhibit NODAL-signaling by directly targeting NODAL. Inhibits EIF4E-mediated mRNA nuclear export. May play a role in hematopoietic differentiation. The polypeptide is Hematopoietically-expressed homeobox protein HHEX (HHEX) (Homo sapiens (Human)).